Here is a 380-residue protein sequence, read N- to C-terminus: Cytochrome b (380 aa).

The next 4 membrane-spanning stretches (helical) occupy residues 33-53 (FGSL…FLAM), 77-98 (WLIR…FIHV), 113-133 (WNIG…GYVL), and 178-198 (FFAF…VHLL). 2 residues coordinate heme b: His-83 and His-97. Residues His-182 and His-196 each coordinate heme b. His-201 provides a ligand contact to a ubiquinone. Helical transmembrane passes span 226–246 (IKDL…VLFF), 288–308 (LGGV…PLLN), 320–340 (LTQF…WIGG), and 347–367 (FTTI…VLMP).

It belongs to the cytochrome b family. In terms of assembly, the cytochrome bc1 complex contains 11 subunits: 3 respiratory subunits (MT-CYB, CYC1 and UQCRFS1), 2 core proteins (UQCRC1 and UQCRC2) and 6 low-molecular weight proteins (UQCRH/QCR6, UQCRB/QCR7, UQCRQ/QCR8, UQCR10/QCR9, UQCR11/QCR10 and a cleavage product of UQCRFS1). This cytochrome bc1 complex then forms a dimer. Requires heme b as cofactor.

The protein resides in the mitochondrion inner membrane. Component of the ubiquinol-cytochrome c reductase complex (complex III or cytochrome b-c1 complex) that is part of the mitochondrial respiratory chain. The b-c1 complex mediates electron transfer from ubiquinol to cytochrome c. Contributes to the generation of a proton gradient across the mitochondrial membrane that is then used for ATP synthesis. The sequence is that of Cytochrome b (MT-CYB) from Thomasomys notatus (Distinguished oldfield mouse).